The chain runs to 102 residues: Large ribosomal subunit protein uL24 (102 aa).

This sequence belongs to the universal ribosomal protein uL24 family. In terms of assembly, part of the 50S ribosomal subunit.

Functionally, one of two assembly initiator proteins, it binds directly to the 5'-end of the 23S rRNA, where it nucleates assembly of the 50S subunit. One of the proteins that surrounds the polypeptide exit tunnel on the outside of the subunit. The protein is Large ribosomal subunit protein uL24 of Paraburkholderia phytofirmans (strain DSM 17436 / LMG 22146 / PsJN) (Burkholderia phytofirmans).